Consider the following 248-residue polypeptide: NAD(P)H-quinone oxidoreductase subunit K 1 (248 aa).

A propeptide spanning residues Met1 to Ser2 is cleaved from the precursor. Cys62, Cys63, Cys127, and Cys158 together coordinate [4Fe-4S] cluster. The tract at residues Met228 to Gly248 is disordered. The segment covering Leu236 to Gly248 has biased composition (polar residues).

This sequence belongs to the complex I 20 kDa subunit family. As to quaternary structure, NDH-1 can be composed of about 15 different subunits; different subcomplexes with different compositions have been identified which probably have different functions. The cofactor is [4Fe-4S] cluster.

Its subcellular location is the cellular thylakoid membrane. It carries out the reaction a plastoquinone + NADH + (n+1) H(+)(in) = a plastoquinol + NAD(+) + n H(+)(out). It catalyses the reaction a plastoquinone + NADPH + (n+1) H(+)(in) = a plastoquinol + NADP(+) + n H(+)(out). Functionally, NDH-1 shuttles electrons from an unknown electron donor, via FMN and iron-sulfur (Fe-S) centers, to quinones in the respiratory and/or the photosynthetic chain. The immediate electron acceptor for the enzyme in this species is believed to be plastoquinone. Couples the redox reaction to proton translocation, and thus conserves the redox energy in a proton gradient. Cyanobacterial NDH-1 also plays a role in inorganic carbon-concentration. This Synechocystis sp. (strain ATCC 27184 / PCC 6803 / Kazusa) protein is NAD(P)H-quinone oxidoreductase subunit K 1.